Here is a 337-residue protein sequence, read N- to C-terminus: Homeobox protein knotted-1-like 4 (337 aa).

Disordered stretches follow at residues 1–56 (MEQQ…SFHE) and 159–190 (FTLDDNGSEGGNSSEDEQEAGGGDMASAGLPE). Over residues 27 to 38 (PTSTSTSPAVPS) the composition is skewed to low complexity. In terms of domain architecture, ELK spans 200–220 (ELKSHLLNKYSGYLSSLWREL). The segment at residues 221–284 (SKKKKKGKLP…NQRKRHWKPT (64 aa)) is a DNA-binding region (homeobox; TALE-type).

It belongs to the TALE/KNOX homeobox family.

The protein resides in the nucleus. This is Homeobox protein knotted-1-like 4 (OSH10) from Oryza sativa subsp. japonica (Rice).